A 336-amino-acid polypeptide reads, in one-letter code: MAESLRERGAEVVFFGSESGLERELVPKAGFGLHALPLSGLAGGPASRARASLLFARAVVRCRALLRELRPGAVLGVGGYASAPAVAAARLLGIPTFIHEQNSVPGKVNRAAGRFAREVLVAFPDAARRFGRAVRAAHVGMPTRRQFFSASREEALRRLGLEPPVVLVFGGSGGALRINLAAAEAFRGQTPYSVVQISGRRDFPRLSSDNPRHRILEYAEDIWHHVTAADVVVIRGGAGSLFDVAAVGRAAIVVPYPHHRDNQQLLNARYFTERGAAELLPDHEVDAKTLRGRVEELLGDGERRLRMASSMRSLATPRAAEEVAERMLAAGREGTG.

UDP-N-acetyl-alpha-D-glucosamine is bound by residues Asn-102, Arg-144, Ser-172, and Gln-264.

It belongs to the glycosyltransferase 28 family. MurG subfamily.

It is found in the cell membrane. The enzyme catalyses di-trans,octa-cis-undecaprenyl diphospho-N-acetyl-alpha-D-muramoyl-L-alanyl-D-glutamyl-meso-2,6-diaminopimeloyl-D-alanyl-D-alanine + UDP-N-acetyl-alpha-D-glucosamine = di-trans,octa-cis-undecaprenyl diphospho-[N-acetyl-alpha-D-glucosaminyl-(1-&gt;4)]-N-acetyl-alpha-D-muramoyl-L-alanyl-D-glutamyl-meso-2,6-diaminopimeloyl-D-alanyl-D-alanine + UDP + H(+). The protein operates within cell wall biogenesis; peptidoglycan biosynthesis. Cell wall formation. Catalyzes the transfer of a GlcNAc subunit on undecaprenyl-pyrophosphoryl-MurNAc-pentapeptide (lipid intermediate I) to form undecaprenyl-pyrophosphoryl-MurNAc-(pentapeptide)GlcNAc (lipid intermediate II). This chain is UDP-N-acetylglucosamine--N-acetylmuramyl-(pentapeptide) pyrophosphoryl-undecaprenol N-acetylglucosamine transferase, found in Rubrobacter xylanophilus (strain DSM 9941 / JCM 11954 / NBRC 16129 / PRD-1).